Reading from the N-terminus, the 71-residue chain is Biotinylated protein TB7.3 homolog (71 aa).

The Biotinyl-binding domain maps to 2–71 (AEDVRAEIVA…QAGHLIAVID (70 aa)). N6-biotinyllysine is present on Lys37.

The chain is Biotinylated protein TB7.3 homolog from Mycolicibacterium smegmatis (strain ATCC 700084 / mc(2)155) (Mycobacterium smegmatis).